We begin with the raw amino-acid sequence, 763 residues long: Phosphoglycerol transferase I (763 aa).

4 consecutive transmembrane segments (helical) span residues 1-21 (MSEL…AWKA), 26-46 (WWFA…ITLF), 77-97 (ILPG…LGWI), and 108-128 (FGYS…SPAF).

Belongs to the OpgB family.

It localises to the cell inner membrane. The enzyme catalyses a phosphatidylglycerol + a membrane-derived-oligosaccharide D-glucose = a 1,2-diacyl-sn-glycerol + a membrane-derived-oligosaccharide 6-(glycerophospho)-D-glucose.. It functions in the pathway glycan metabolism; osmoregulated periplasmic glucan (OPG) biosynthesis. Transfers a phosphoglycerol residue from phosphatidylglycerol to the membrane-bound nascent glucan backbones. The chain is Phosphoglycerol transferase I from Escherichia coli (strain UTI89 / UPEC).